Here is a 119-residue protein sequence, read N- to C-terminus: Type II secretion system protein I (119 aa).

The propeptide at 1–5 (MNARG) is leader sequence. An N-methylmethionine modification is found at Met-6. A helical transmembrane segment spans residues 6–26 (MTLLEVMVALAVFAIAGLAVM).

It belongs to the GSP I family. As to quaternary structure, type II secretion is composed of four main components: the outer membrane complex, the inner membrane complex, the cytoplasmic secretion ATPase and the periplasm-spanning pseudopilus. Interacts with core component ExeG. In terms of processing, cleaved by prepilin peptidase. Post-translationally, methylated by prepilin peptidase at the amino group of the N-terminal methionine once the leader sequence is cleaved by prepilin peptidase.

The protein resides in the cell inner membrane. Component of the type II secretion system required for the energy-dependent secretion of extracellular factors such as proteases and toxins from the periplasm. Part of the pseudopilus tip complex that is critical for the recognition and binding of secretion substrates. The chain is Type II secretion system protein I (exeI) from Aeromonas hydrophila.